The primary structure comprises 112 residues: Putative pterin-4-alpha-carbinolamine dehydratase (112 aa).

It belongs to the pterin-4-alpha-carbinolamine dehydratase family.

It carries out the reaction (4aS,6R)-4a-hydroxy-L-erythro-5,6,7,8-tetrahydrobiopterin = (6R)-L-erythro-6,7-dihydrobiopterin + H2O. The sequence is that of Putative pterin-4-alpha-carbinolamine dehydratase from Shewanella baltica (strain OS155 / ATCC BAA-1091).